Reading from the N-terminus, the 362-residue chain is Probable endopolygalacturonase II (362 aa).

The signal sequence occupies residues methionine 1–serine 20. Residues alanine 21–arginine 27 constitute a propeptide that is removed on maturation. A disulfide bond links cysteine 30 and cysteine 45. Residues serine 156–asparagine 186 form a PbH1 1 repeat. Aspartate 201 (proton donor) is an active-site residue. The cysteines at positions 203 and 219 are disulfide-linked. PbH1 repeat units lie at residues glycine 209–serine 229, valine 238–threonine 259, valine 267–glutamine 289, and threonine 301–alanine 322. Residue histidine 223 is part of the active site. Asparagine 240 carries an N-linked (GlcNAc...) asparagine glycan. Cystine bridges form between cysteine 329/cysteine 334 and cysteine 353/cysteine 362.

The protein belongs to the glycosyl hydrolase 28 family.

Its subcellular location is the secreted. It carries out the reaction (1,4-alpha-D-galacturonosyl)n+m + H2O = (1,4-alpha-D-galacturonosyl)n + (1,4-alpha-D-galacturonosyl)m.. In terms of biological role, involved in maceration and soft-rotting of plant tissue. Hydrolyzes the 1,4-alpha glycosidic bonds of de-esterified pectate in the smooth region of the plant cell wall. The polypeptide is Probable endopolygalacturonase II (pgaII) (Aspergillus kawachii (strain NBRC 4308) (White koji mold)).